A 428-amino-acid chain; its full sequence is Adenylosuccinate synthetase (428 aa).

Residues 12–18 (GDEGKGK) and 40–42 (GHT) each bind GTP. The Proton acceptor role is filled by D13. The Mg(2+) site is built by D13 and G40. IMP contacts are provided by residues 13 to 16 (DEGK), 38 to 41 (NAGH), T128, R142, Q223, T238, and R302. H41 (proton donor) is an active-site residue. Substrate is bound at residue 298–304 (VTTKRPR). GTP contacts are provided by residues R304, 330 to 332 (KLD), and 412 to 414 (GVG).

It belongs to the adenylosuccinate synthetase family. As to quaternary structure, homodimer. It depends on Mg(2+) as a cofactor.

The protein localises to the cytoplasm. The enzyme catalyses IMP + L-aspartate + GTP = N(6)-(1,2-dicarboxyethyl)-AMP + GDP + phosphate + 2 H(+). It functions in the pathway purine metabolism; AMP biosynthesis via de novo pathway; AMP from IMP: step 1/2. Its function is as follows. Plays an important role in the de novo pathway of purine nucleotide biosynthesis. Catalyzes the first committed step in the biosynthesis of AMP from IMP. The protein is Adenylosuccinate synthetase of Cutibacterium acnes (strain DSM 16379 / KPA171202) (Propionibacterium acnes).